A 366-amino-acid chain; its full sequence is UDP-GlcNAc:ribostamycin N-acetylglucosaminyltransferase (366 aa).

A compositionally biased stretch (low complexity) spans 342-352 (AAGAGPAVPAG). A disordered region spans residues 342-366 (AAGAGPAVPAGAGEGRGGREEEHGG). Over residues 357–366 (RGGREEEHGG) the composition is skewed to basic and acidic residues.

This sequence belongs to the glycosyltransferase group 1 family. Glycosyltransferase 4 subfamily. It depends on a divalent metal cation as a cofactor.

The enzyme catalyses ribostamycin + UDP-N-acetyl-alpha-D-glucosamine = 2'''-acetyl-6'''-hydroxyneomycin C + UDP + H(+). It participates in antibiotic biosynthesis; neomycin biosynthesis. Glycosyltransferase involved in the biosynthesis of neomycin by mediating glycosylation of ribostamycin with UDP-GlcNAc as a sugar donor to generate 2'''-acetyl-6'''-hydroxyneomycin C. The chain is UDP-GlcNAc:ribostamycin N-acetylglucosaminyltransferase (neoK) from Streptomyces fradiae (Streptomyces roseoflavus).